The primary structure comprises 339 residues: MTSFEAQQETFDCSEYGNGSCPENERSLGVRAAMYSLMAGAIFITIFGNLVMIISISYFKQLHTPTNLLILSMAVTDFLLGFTIMPYSMVRSVENCWYFGLTFCKIHYSFDLMLSITSIFHLCSVAIDRFYAICHPLHYCTKMTIPVVKRLLLVCWSVPGAFAFGVVFSEAYADGIEGYDILVACSSSCPVMFNKLWGTTLFVAGFFTPSSMMVGIYGKIFAVSKKHARVIDNLPENQNNQMRKDKKAAKTLGIVMGVFLLCWFPCFFTILLDPFLNFSTPAILFDALTWFGYFNSTCNPLIYGFFYPWFRRALRYILLGKIFSSHFHNTNLFTQKETE.

Residues M1–S36 lie on the Extracellular side of the membrane. A glycan (N-linked (GlcNAc...) asparagine) is linked at N18. Disulfide bonds link C21–C185 and C104–C189. A helical transmembrane segment spans residues L37–S57. The Cytoplasmic segment spans residues Y58–N67. A helical transmembrane segment spans residues L68–S88. Topologically, residues M89–I106 are extracellular. A helical transmembrane segment spans residues H107–I127. Topologically, residues D128–R150 are cytoplasmic. Residues L151–A171 form a helical membrane-spanning segment. Residues Y172 to K195 are Extracellular-facing. A helical transmembrane segment spans residues L196–I216. Residues Y217–T251 lie on the Cytoplasmic side of the membrane. A helical membrane pass occupies residues L252–L272. Over D273 to A287 the chain is Extracellular. N277 carries N-linked (GlcNAc...) asparagine glycosylation. Residues L288–F310 traverse the membrane as a helical segment. Residues R311 to E339 lie on the Cytoplasmic side of the membrane.

Belongs to the G-protein coupled receptor 1 family.

The protein localises to the cell membrane. In terms of biological role, orphan olfactory receptor specific for trace amines. Trace amine compounds are enriched in animal body fluids and act on trace amine-associated receptors (TAARs) to elicit both intraspecific and interspecific innate behaviors. Ligand-binding causes a conformation change that triggers signaling via the G(s)-class of G-proteins which activate adenylate cyclase. May also be required to provide olfactory input into limbic brain areas to regulate emotional behaviors likely via modulation of the dopamine system. This is Trace amine-associated receptor 2 (Taar2) from Rattus norvegicus (Rat).